We begin with the raw amino-acid sequence, 2645 residues long: Non-reducing polyketide synthase AC (2645 aa).

Residues 73-2366 form an N-terminal acylcarrier protein transacylase domain (SAT) region; sequence ALQNLNEWLK…TDIVHNAWPM (2294 aa). The active-site Proton donor/acceptor; for transacylase activity is His-260. The region spanning 416–834 is the Ketosynthase family 3 (KS3) domain; that stretch reads DDKIAVIGMA…GSNSSLVVTE (419 aa). Catalysis depends on for beta-ketoacyl synthase activity residues Cys-583, His-718, and His-757. The segment at 943 to 1252 is malonyl-CoA:ACP transacylase (MAT) domain; the sequence is CFGGQISTYI…HAVSITTDKS (310 aa). The interval 1324 to 1457 is N-terminal hotdog fold; sequence SKGFTSFAGY…GVCSFCSATD (134 aa). Residues 1324–1637 form the PKS/mFAS DH domain; that stretch reads SKGFTSFAGY…YNKVPLPVMR (314 aa). Residues 1330–1641 are product template (PT) domain; it reads FAGYIDGNQR…PLPVMRGILG (312 aa). His-1359 serves as the catalytic Proton acceptor; for dehydratase activity. A C-terminal hotdog fold region spans residues 1487–1637; sequence NIMQGTANIY…YNKVPLPVMR (151 aa). Asp-1542 acts as the Proton donor; for dehydratase activity in catalysis. The span at 1684 to 1696 shows a compositional bias: polar residues; sequence NGTTGTENPQIKS. Residues 1684 to 1716 are disordered; that stretch reads NGTTGTENPQIKSKTNKVKKVPTRKSGGSDLET. Positions 1697 to 1706 are enriched in basic residues; that stretch reads KTNKVKKVPT. In terms of domain architecture, Carrier spans 1711–1788; sequence GSDLETPAKT…SLVKYIREIR (78 aa). An O-(pantetheine 4'-phosphoryl)serine modification is found at Ser-1748. Residues 1794-1805 show a composition bias toward acidic residues; that stretch reads QNVDDSESESEE. The segment at 1794–1816 is disordered; it reads QNVDDSESESEELQQQATPIDSA. Tyr-2009 serves as the catalytic For methyltransferase activity. The segment at 2023 to 2197 is methyltransferase (CMeT) domain; it reads EVFVEKIGSS…SVGYGHVDWT (175 aa). Residues 2269–2573 are NADPH-binding (R) domain; the sequence is CVLITGATGS…NIIPFYDWVQ (305 aa).

Its pathway is mycotoxin biosynthesis. In terms of biological role, non-reducing polyketide synthase; part of the gene cluster that mediates the biosynthesis of the selective antifungal agent ascochitine, an o-quinone methide that plays a possible protective role against other microbial competitors in nature and is considered to be important for pathogenicity of legume-associated Didymella species. The pathway probably begins with the synthesis of a keto-aldehyde intermediate by the ascochitine non-reducing polyketide synthase pksAC from successive condensations of 4 malonyl-CoA units, presumably with a simple acetyl-CoA starter unit. Release of the keto-aldehyde intermediate is consistent with the presence of the C-terminal reductive release domain. The HR-PKS (orf7) probably makes a diketide starter unit which is passed to the non-reducing polyketide synthase pksAC for further extension, producing ascochital and ascochitine. The aldehyde dehydrogenase (orf1), the 2-oxoglutarate-dependent dioxygenase (orf3) and the dehydrogenase (orf9) are probably involved in subsequent oxidations of methyl groups to the carboxylic acid of the heterocyclic ring. The ascochitine gene cluster also includes a gene encoding a short peptide (orf2) that is often found in secondary metabolite gene clusters and which function has still to be determined. This Didymella fabae (Leaf and pod spot disease fungus) protein is Non-reducing polyketide synthase AC.